The following is a 427-amino-acid chain: Homogentisate 1,2-dioxygenase (427 aa).

Residue His285 is the Proton acceptor of the active site. Fe cation-binding residues include His328 and Glu334. Tyr343 and His364 together coordinate homogentisate. A Fe cation-binding site is contributed by His364.

The protein belongs to the homogentisate dioxygenase family. Hexamer; dimer of trimers. The cofactor is Fe cation.

It catalyses the reaction homogentisate + O2 = 4-maleylacetoacetate + H(+). Its pathway is amino-acid degradation; L-phenylalanine degradation; acetoacetate and fumarate from L-phenylalanine: step 4/6. Functionally, involved in the catabolism of homogentisate (2,5-dihydroxyphenylacetate or 2,5-OH-PhAc), a central intermediate in the degradation of phenylalanine and tyrosine. Catalyzes the oxidative ring cleavage of the aromatic ring of homogentisate to yield maleylacetoacetate. This is Homogentisate 1,2-dioxygenase from Caulobacter sp. (strain K31).